A 424-amino-acid chain; its full sequence is UPF0597 protein SO_1403 (424 aa).

It belongs to the UPF0597 family.

This chain is UPF0597 protein SO_1403, found in Shewanella oneidensis (strain ATCC 700550 / JCM 31522 / CIP 106686 / LMG 19005 / NCIMB 14063 / MR-1).